The sequence spans 433 residues: Cyclin-dependent kinase F-3 (433 aa).

One can recognise a Protein kinase domain in the interval 4 to 283; the sequence is YKVIREIGDG…AEQSLQHPFF (280 aa). ATP is bound by residues 10–18 and K33; that span reads IGDGTCGNV. D125 serves as the catalytic Proton acceptor. Residue S151 is modified to Phosphoserine. Phosphothreonine is present on T156.

It belongs to the protein kinase superfamily. CMGC Ser/Thr protein kinase family. CDC2/CDKX subfamily.

The catalysed reaction is L-seryl-[protein] + ATP = O-phospho-L-seryl-[protein] + ADP + H(+). The enzyme catalyses L-threonyl-[protein] + ATP = O-phospho-L-threonyl-[protein] + ADP + H(+). It catalyses the reaction [DNA-directed RNA polymerase] + ATP = phospho-[DNA-directed RNA polymerase] + ADP + H(+). The protein is Cyclin-dependent kinase F-3 (CDKF-3) of Oryza sativa subsp. japonica (Rice).